We begin with the raw amino-acid sequence, 137 residues long: Small ribosomal subunit protein bS16m (137 aa).

The transit peptide at 1–34 directs the protein to the mitochondrion; that stretch reads MVHLTTLLCKAYRGGHLTIRLALGGCTNRPFYRI. Threonine 130 is modified (phosphothreonine).

This sequence belongs to the bacterial ribosomal protein bS16 family. In terms of assembly, component of the mitochondrial small ribosomal subunit (mt-SSU). Mature mammalian 55S mitochondrial ribosomes consist of a small (28S) and a large (39S) subunit. The 28S small subunit contains a 12S ribosomal RNA (12S mt-rRNA) and 30 different proteins. The 39S large subunit contains a 16S rRNA (16S mt-rRNA), a copy of mitochondrial valine transfer RNA (mt-tRNA(Val)), which plays an integral structural role, and 52 different proteins. bS16m has a zinc binding site.

The protein localises to the mitochondrion. In Homo sapiens (Human), this protein is Small ribosomal subunit protein bS16m (MRPS16).